Here is a 600-residue protein sequence, read N- to C-terminus: UvrABC system protein C (600 aa).

Residues 15 to 92 (DKPGCYLMKD…IKKYQPYYNV (78 aa)) form the GIY-YIG domain. The 36-residue stretch at 197–232 (SQVKQDLTEKMTQASMNLEFERAAEFRDQLKYIEQT) folds into the UVR domain.

Belongs to the UvrC family. As to quaternary structure, interacts with UvrB in an incision complex.

The protein localises to the cytoplasm. The UvrABC repair system catalyzes the recognition and processing of DNA lesions. UvrC both incises the 5' and 3' sides of the lesion. The N-terminal half is responsible for the 3' incision and the C-terminal half is responsible for the 5' incision. This chain is UvrABC system protein C, found in Lactobacillus gasseri (strain ATCC 33323 / DSM 20243 / BCRC 14619 / CIP 102991 / JCM 1131 / KCTC 3163 / NCIMB 11718 / NCTC 13722 / AM63).